Here is a 920-residue protein sequence, read N- to C-terminus: Histone-lysine N-methyltransferase, H3 lysine-4 specific (920 aa).

An RRM domain is found at 94 to 179 (TQVFVSNISP…KPLSVVLDRD (86 aa)). Over residues 205–216 (KQRFEREDESSR) the composition is skewed to basic and acidic residues. 2 disordered regions span residues 205–242 (KQRF…TLSN) and 448–485 (KRVD…YQLN). Polar residues-rich tracts occupy residues 233 to 242 (PSKNSQTLSN) and 453 to 462 (SKMNLSAGSK). Positions 463–476 (TKSKLQRRRRRRHE) are enriched in basic residues. Residues 749 to 754 (RVNNRR) carry the RxxxRR motif motif. Positions 781-898 (KQLHFGPSRI…HGEELTYDYK (118 aa)) constitute an SET domain. Tyrosine 897 is an S-adenosyl-L-methionine binding site. The Post-SET domain occupies 904–920 (DKIPCLCGAPTCRGYLN).

It belongs to the class V-like SAM-binding methyltransferase superfamily. In terms of assembly, component of the Set1C/COMPASS complex composed of ash2, sdc1, set1, shg1, spp1, swd1, swd2 and swd3.

The protein resides in the nucleus. It localises to the chromosome. The catalysed reaction is L-lysyl(4)-[histone H3] + 3 S-adenosyl-L-methionine = N(6),N(6),N(6)-trimethyl-L-lysyl(4)-[histone H3] + 3 S-adenosyl-L-homocysteine + 3 H(+). The enzyme catalyses N(6)-methyl-L-lysyl(4)-[histone H3] + S-adenosyl-L-methionine = N(6),N(6)-dimethyl-L-lysyl(4)-[histone H3] + S-adenosyl-L-homocysteine + H(+). It catalyses the reaction N(6),N(6)-dimethyl-L-lysyl(4)-[histone H3] + S-adenosyl-L-methionine = N(6),N(6),N(6)-trimethyl-L-lysyl(4)-[histone H3] + S-adenosyl-L-homocysteine + H(+). In terms of biological role, catalytic component of the COMPASS (Set1C) complex that specifically mono-, di- and trimethylates histone H3 to form H3K4me1/2/3. Binds RNA which might negatively affect its histone methyltransferase activity. COMPASS recognizes ubiquitinated H2B on one face of the nucleosome which stimulates the methylation of H3 on the opposing face. Methylation promotes maintenance of active chromatin states at euchromatic chromosomal domains and is present throughout the cell cycle. Plays a role in telomere maintenance and DNA repair in an ATM kinase rad3-dependent pathway. Required for efficient telomeric and centromeric silencing. This is Histone-lysine N-methyltransferase, H3 lysine-4 specific from Schizosaccharomyces pombe (strain 972 / ATCC 24843) (Fission yeast).